Consider the following 354-residue polypeptide: Protein RecA (354 aa).

67-74 (GPESSGKT) is an ATP binding site. The interval 333-354 (MNEFVPSSEEQAEASLSEDHDQ) is disordered.

Belongs to the RecA family.

The protein localises to the cytoplasm. In terms of biological role, can catalyze the hydrolysis of ATP in the presence of single-stranded DNA, the ATP-dependent uptake of single-stranded DNA by duplex DNA, and the ATP-dependent hybridization of homologous single-stranded DNAs. It interacts with LexA causing its activation and leading to its autocatalytic cleavage. The polypeptide is Protein RecA (Laribacter hongkongensis (strain HLHK9)).